The primary structure comprises 317 residues: Uridylate kinase (317 aa).

9 to 12 (KISG) contributes to the ATP binding site. G49 contributes to the UMP binding site. G50 and R54 together coordinate ATP. UMP is bound by residues D69 and 130–137 (TGRPYFTT). Residues N158, Y164, and D167 each contribute to the ATP site.

Belongs to the UMP kinase family. As to quaternary structure, homohexamer.

It localises to the cytoplasm. The catalysed reaction is UMP + ATP = UDP + ADP. It functions in the pathway pyrimidine metabolism; CTP biosynthesis via de novo pathway; UDP from UMP (UMPK route): step 1/1. With respect to regulation, inhibited by UTP. Its function is as follows. Catalyzes the reversible phosphorylation of UMP to UDP. This is Uridylate kinase from Malacoplasma penetrans (strain HF-2) (Mycoplasma penetrans).